A 158-amino-acid chain; its full sequence is Transcription elongation factor GreA (158 aa).

Residues 3–75 (TEKTYPMTQE…TQLENMIRNA (73 aa)) adopt a coiled-coil conformation.

The protein belongs to the GreA/GreB family.

Necessary for efficient RNA polymerase transcription elongation past template-encoded arresting sites. The arresting sites in DNA have the property of trapping a certain fraction of elongating RNA polymerases that pass through, resulting in locked ternary complexes. Cleavage of the nascent transcript by cleavage factors such as GreA or GreB allows the resumption of elongation from the new 3'terminus. GreA releases sequences of 2 to 3 nucleotides. The polypeptide is Transcription elongation factor GreA (Bacillus cereus (strain ATCC 14579 / DSM 31 / CCUG 7414 / JCM 2152 / NBRC 15305 / NCIMB 9373 / NCTC 2599 / NRRL B-3711)).